The primary structure comprises 513 residues: ATP synthase subunit alpha (513 aa).

Residue 169–176 (GDRQCGKT) participates in ATP binding.

Belongs to the ATPase alpha/beta chains family. F-type ATPases have 2 components, CF(1) - the catalytic core - and CF(0) - the membrane proton channel. CF(1) has five subunits: alpha(3), beta(3), gamma(1), delta(1), epsilon(1). CF(0) has three main subunits: a(1), b(2) and c(9-12). The alpha and beta chains form an alternating ring which encloses part of the gamma chain. CF(1) is attached to CF(0) by a central stalk formed by the gamma and epsilon chains, while a peripheral stalk is formed by the delta and b chains.

It is found in the cell inner membrane. The enzyme catalyses ATP + H2O + 4 H(+)(in) = ADP + phosphate + 5 H(+)(out). In terms of biological role, produces ATP from ADP in the presence of a proton gradient across the membrane. The alpha chain is a regulatory subunit. This is ATP synthase subunit alpha from Burkholderia cenocepacia (strain ATCC BAA-245 / DSM 16553 / LMG 16656 / NCTC 13227 / J2315 / CF5610) (Burkholderia cepacia (strain J2315)).